The chain runs to 122 residues: Large ribosomal subunit protein uL14 (122 aa).

The protein belongs to the universal ribosomal protein uL14 family. As to quaternary structure, part of the 50S ribosomal subunit. Forms a cluster with proteins L3 and L19. In the 70S ribosome, L14 and L19 interact and together make contacts with the 16S rRNA in bridges B5 and B8.

In terms of biological role, binds to 23S rRNA. Forms part of two intersubunit bridges in the 70S ribosome. The polypeptide is Large ribosomal subunit protein uL14 (Streptococcus equi subsp. equi (strain 4047)).